We begin with the raw amino-acid sequence, 289 residues long: Bis(5'-nucleosyl)-tetraphosphatase, symmetrical (289 aa).

It belongs to the Ap4A hydrolase family.

The catalysed reaction is P(1),P(4)-bis(5'-adenosyl) tetraphosphate + H2O = 2 ADP + 2 H(+). Hydrolyzes diadenosine 5',5'''-P1,P4-tetraphosphate to yield ADP. This is Bis(5'-nucleosyl)-tetraphosphatase, symmetrical from Yersinia pseudotuberculosis serotype O:3 (strain YPIII).